Here is an 876-residue protein sequence, read N- to C-terminus: Alanine--tRNA ligase (876 aa).

Positions 564, 568, 666, and 670 each coordinate Zn(2+).

It belongs to the class-II aminoacyl-tRNA synthetase family. As to quaternary structure, homotetramer. Requires Zn(2+) as cofactor.

It localises to the cytoplasm. The enzyme catalyses tRNA(Ala) + L-alanine + ATP = L-alanyl-tRNA(Ala) + AMP + diphosphate. In terms of biological role, catalyzes the attachment of alanine to tRNA(Ala) in a two-step reaction: alanine is first activated by ATP to form Ala-AMP and then transferred to the acceptor end of tRNA(Ala). Also edits incorrectly charged Ser-tRNA(Ala) and Gly-tRNA(Ala) via its editing domain. This chain is Alanine--tRNA ligase, found in Salmonella paratyphi B (strain ATCC BAA-1250 / SPB7).